The sequence spans 256 residues: Type II phosphatidylinositol 4,5-bisphosphate 4-phosphatase (256 aa).

The segment covering Met-1–Ser-10 has biased composition (basic and acidic residues). The segment at Met-1 to Pro-25 is disordered. Over residues Ile-13–Pro-22 the composition is skewed to polar residues. Cys-106 is an active-site residue. The CX5R motif signature appears at Cys-106 to Arg-112. 2 consecutive transmembrane segments (helical) span residues Cys-191–Gly-211 and Trp-226–Ile-246.

The protein resides in the late endosome membrane. The protein localises to the lysosome membrane. The catalysed reaction is a 1,2-diacyl-sn-glycero-3-phospho-(1D-myo-inositol-4,5-bisphosphate) + H2O = a 1,2-diacyl-sn-glycero-3-phospho-(1D-myo-inositol-5-phosphate) + phosphate. Its function is as follows. Catalyzes the hydrolysis of phosphatidylinositol-4,5-bisphosphate (PtdIns-4,5-P2) to phosphatidylinositol-4-phosphate (PtdIns-4-P). This is Type II phosphatidylinositol 4,5-bisphosphate 4-phosphatase from Xenopus laevis (African clawed frog).